The chain runs to 215 residues: uncharacterized protein (215 aa).

This is an uncharacterized protein from Acanthamoeba polyphaga mimivirus (APMV).